Consider the following 158-residue polypeptide: Arginine repressor (158 aa).

Belongs to the ArgR family.

Its subcellular location is the cytoplasm. It functions in the pathway amino-acid biosynthesis; L-arginine biosynthesis [regulation]. Regulates arginine biosynthesis genes. The chain is Arginine repressor from Anaeromyxobacter sp. (strain Fw109-5).